The primary structure comprises 322 residues: Dirigent protein 9 (322 aa).

The signal sequence occupies residues 1–20 (MAKALHITIFLFLISSNLLA).

It belongs to the plant dirigent protein family. As to quaternary structure, homodimer.

The protein localises to the secreted. The protein resides in the extracellular space. Its subcellular location is the apoplast. In terms of biological role, dirigent proteins impart stereoselectivity on the phenoxy radical-coupling reaction, yielding optically active lignans from two molecules of coniferyl alcohol in the biosynthesis of lignans, flavonolignans, and alkaloids and thus plays a central role in plant secondary metabolism. This chain is Dirigent protein 9 (DIR9), found in Arabidopsis thaliana (Mouse-ear cress).